A 337-amino-acid polypeptide reads, in one-letter code: Glyceraldehyde-3-phosphate dehydrogenase (337 aa).

NAD(+)-binding positions include Arg12 to Ile13, Asp34, and Lys79. D-glyceraldehyde 3-phosphate-binding positions include Ser150–Thr152, Thr181, Thr210–Gly211, and Arg233. Cys151 serves as the catalytic Nucleophile. Asn315 contacts NAD(+).

The protein belongs to the glyceraldehyde-3-phosphate dehydrogenase family. In terms of assembly, homotetramer.

The protein resides in the cytoplasm. The enzyme catalyses D-glyceraldehyde 3-phosphate + phosphate + NAD(+) = (2R)-3-phospho-glyceroyl phosphate + NADH + H(+). Its pathway is carbohydrate degradation; glycolysis; pyruvate from D-glyceraldehyde 3-phosphate: step 1/5. The polypeptide is Glyceraldehyde-3-phosphate dehydrogenase (GPD) (Phanerodontia chrysosporium (White-rot fungus)).